Consider the following 325-residue polypeptide: Thiamine-monophosphate kinase (325 aa).

Aspartate 27 and aspartate 44 together coordinate Mg(2+). Residue histidine 51 participates in substrate binding. A Mg(2+)-binding site is contributed by aspartate 73. ATP contacts are provided by residues tyrosine 103, 120–121 (GD), and arginine 147. Residue aspartate 121 participates in Mg(2+) binding. Aspartate 215 serves as a coordination point for Mg(2+). Residue serine 217 participates in ATP binding. Residue aspartate 218 coordinates Mg(2+). Substrate is bound by residues glutamate 264 and tyrosine 321.

Belongs to the thiamine-monophosphate kinase family.

It carries out the reaction thiamine phosphate + ATP = thiamine diphosphate + ADP. The protein operates within cofactor biosynthesis; thiamine diphosphate biosynthesis; thiamine diphosphate from thiamine phosphate: step 1/1. Its function is as follows. Catalyzes the ATP-dependent phosphorylation of thiamine-monophosphate (TMP) to form thiamine-pyrophosphate (TPP), the active form of vitamin B1. This chain is Thiamine-monophosphate kinase, found in Bacillus subtilis (strain 168).